Consider the following 310-residue polypeptide: Beta-ketoacyl-[acyl-carrier-protein] synthase III (310 aa).

Active-site residues include Cys116 and His239. Residues 240–244 form an ACP-binding region; sequence QANYR. Residue Asn269 is part of the active site.

This sequence belongs to the thiolase-like superfamily. FabH family. Homodimer.

It localises to the cytoplasm. It carries out the reaction malonyl-[ACP] + acetyl-CoA + H(+) = 3-oxobutanoyl-[ACP] + CO2 + CoA. Its pathway is lipid metabolism; fatty acid biosynthesis. Functionally, catalyzes the condensation reaction of fatty acid synthesis by the addition to an acyl acceptor of two carbons from malonyl-ACP. Catalyzes the first condensation reaction which initiates fatty acid synthesis and may therefore play a role in governing the total rate of fatty acid production. Possesses both acetoacetyl-ACP synthase and acetyl transacylase activities. Its substrate specificity determines the biosynthesis of branched-chain and/or straight-chain of fatty acids. The protein is Beta-ketoacyl-[acyl-carrier-protein] synthase III of Acholeplasma laidlawii (strain PG-8A).